A 713-amino-acid chain; its full sequence is Probable muscarinic acetylcholine receptor gar-1 (713 aa).

The Extracellular portion of the chain corresponds to 1–20; it reads MPNYTVPPDPADTSWDSPYS. Residue asparagine 3 is glycosylated (N-linked (GlcNAc...) asparagine). The chain crosses the membrane as a helical span at residues 21-41; it reads IPVQIVVWIIIIVLSLETIIG. Over 42-66 the chain is Cytoplasmic; sequence NAMVVMAYRIERNISKQVSNRYIVS. The helical transmembrane segment at 67-87 threads the bilayer; it reads LAISDLIIGIEGFPFFTVYVL. Residues 88–101 lie on the Extracellular side of the membrane; sequence NGDRWPLGWVACQT. A disulfide bond links cysteine 99 and cysteine 180. A helical membrane pass occupies residues 102 to 122; it reads WLFLDYTLCLVSILTVLLITA. Topologically, residues 123-144 are cytoplasmic; that stretch reads DRYLSVCHTAKYLKWQSPTKTQ. Residues 145–165 traverse the membrane as a helical segment; it reads LLIVMSWLLPAIIFGIMIYGW. Over 166 to 189 the chain is Extracellular; the sequence is QAMTGQSTSMSGAECSAPFLSNPY. The chain crosses the membrane as a helical span at residues 190–210; it reads VNMGMYVAYYWTTLVAMLILY. The Cytoplasmic portion of the chain corresponds to 211-633; it reads KGIHQAAKNL…QTKAEKRAHK (423 aa). Disordered stretches follow at residues 256–350, 381–403, 427–475, and 515–585; these read KEKA…SRRC, SRYS…VEKA, KNTD…KQAE, and LIRR…TDTF. Polar residues-rich tracts occupy residues 266–275 and 287–315; these read SGYTSNQAGD and PETS…NDQN. Basic and acidic residues-rich tracts occupy residues 320-333 and 393-403; these read EEER…RESN and HENDEKEVEKA. Residues 429–439 show a composition bias toward low complexity; that stretch reads TDSNNDSDTTS. The segment covering 444–457 has biased composition (basic residues); that stretch reads RSRKYKKNKRPRSS. The segment covering 557-571 has biased composition (polar residues); that stretch reads LTVNNENRGETSSQP. A helical transmembrane segment spans residues 634-656; the sequence is AFRTITFIVGFFAILWSPYYIMA. Topologically, residues 657-670 are extracellular; the sequence is TVYGFCKGECIPSF. Residues 671–693 form a helical membrane-spanning segment; it reads LYTLSYYMCYLNSSGNPFAYALA. Residues 694–713 are Cytoplasmic-facing; the sequence is NRQFRSAFMRMFRGNFNKVA.

Belongs to the G-protein coupled receptor 1 family. Muscarinic acetylcholine receptor subfamily. As to expression, expressed in head region of the larva. In adults, expression is seen in the periventricularis magnocellularis (PVM) neuron.

The protein resides in the cell membrane. Functionally, the muscarinic acetylcholine receptor mediates various cellular responses, including inhibition of adenylate cyclase, breakdown of phosphoinositides and modulation of potassium channels through the action of G proteins. Primary transducing effect is Pi turnover. This Caenorhabditis elegans protein is Probable muscarinic acetylcholine receptor gar-1 (gar-1).